The primary structure comprises 67 residues: DNA-directed RNA polymerase subunit omega (67 aa).

Belongs to the RNA polymerase subunit omega family. In terms of assembly, the RNAP catalytic core consists of 2 alpha, 1 beta, 1 beta' and 1 omega subunit. When a sigma factor is associated with the core the holoenzyme is formed, which can initiate transcription.

It catalyses the reaction RNA(n) + a ribonucleoside 5'-triphosphate = RNA(n+1) + diphosphate. Its function is as follows. Promotes RNA polymerase assembly. Latches the N- and C-terminal regions of the beta' subunit thereby facilitating its interaction with the beta and alpha subunits. The polypeptide is DNA-directed RNA polymerase subunit omega (Paraburkholderia phymatum (strain DSM 17167 / CIP 108236 / LMG 21445 / STM815) (Burkholderia phymatum)).